Reading from the N-terminus, the 446-residue chain is tRNA-2-methylthio-N(6)-dimethylallyladenosine synthase (446 aa).

Residues 2 to 119 (KKIYIKTFGC…LPELIAQRRE (118 aa)) form the MTTase N-terminal domain. The [4Fe-4S] cluster site is built by C11, C48, C82, C156, C160, and C163. In terms of domain architecture, Radical SAM core spans 142–376 (RVEGGAAFVS…RIEAQAQGVN (235 aa)). In terms of domain architecture, TRAM spans 377-440 (RSMVGSVQRV…PHSLRGEAVT (64 aa)).

Belongs to the methylthiotransferase family. MiaB subfamily. As to quaternary structure, monomer. [4Fe-4S] cluster is required as a cofactor.

The protein resides in the cytoplasm. It carries out the reaction N(6)-dimethylallyladenosine(37) in tRNA + (sulfur carrier)-SH + AH2 + 2 S-adenosyl-L-methionine = 2-methylsulfanyl-N(6)-dimethylallyladenosine(37) in tRNA + (sulfur carrier)-H + 5'-deoxyadenosine + L-methionine + A + S-adenosyl-L-homocysteine + 2 H(+). Its function is as follows. Catalyzes the methylthiolation of N6-(dimethylallyl)adenosine (i(6)A), leading to the formation of 2-methylthio-N6-(dimethylallyl)adenosine (ms(2)i(6)A) at position 37 in tRNAs that read codons beginning with uridine. The chain is tRNA-2-methylthio-N(6)-dimethylallyladenosine synthase from Thiobacillus denitrificans (strain ATCC 25259 / T1).